The following is a 325-amino-acid chain: Acetyl-coenzyme A carboxylase carboxyl transferase subunit alpha (325 aa).

Residues 43-297 (ELENNSTQLR…KTSLIAHLRQ (255 aa)) enclose the CoA carboxyltransferase C-terminal domain.

Belongs to the AccA family. Acetyl-CoA carboxylase is a heterohexamer composed of biotin carboxyl carrier protein (AccB), biotin carboxylase (AccC) and two subunits each of ACCase subunit alpha (AccA) and ACCase subunit beta (AccD).

Its subcellular location is the cytoplasm. The enzyme catalyses N(6)-carboxybiotinyl-L-lysyl-[protein] + acetyl-CoA = N(6)-biotinyl-L-lysyl-[protein] + malonyl-CoA. Its pathway is lipid metabolism; malonyl-CoA biosynthesis; malonyl-CoA from acetyl-CoA: step 1/1. Functionally, component of the acetyl coenzyme A carboxylase (ACC) complex. First, biotin carboxylase catalyzes the carboxylation of biotin on its carrier protein (BCCP) and then the CO(2) group is transferred by the carboxyltransferase to acetyl-CoA to form malonyl-CoA. The polypeptide is Acetyl-coenzyme A carboxylase carboxyl transferase subunit alpha (Cyanothece sp. (strain PCC 7425 / ATCC 29141)).